A 71-amino-acid polypeptide reads, in one-letter code: Protein KleB (71 aa).

The H-T-H motif DNA-binding region spans 9–28 (VTTNCRRCGKSISTLSRSLI).

The sequence is that of Protein KleB (kleB) from Escherichia coli.